The sequence spans 364 residues: Developmentally-regulated GTP-binding protein 2 (364 aa).

A (3S)-3-hydroxylysine modification is found at Lys-21. Positions 63 to 288 (ARVALIGFPS…LLEMLWEYLA (226 aa)) constitute an OBG-type G domain. GTP is bound by residues 69–76 (GFPSVGKS), 94–98 (FTTLT), 115–118 (DLPG), 246–249 (NKID), and 269–271 (SCG). Residues Ser-76 and Thr-96 each coordinate Mg(2+). Residues 288 to 363 (ALTCIYTKKR…EHEDVIQIVK (76 aa)) enclose the TGS domain.

The protein belongs to the TRAFAC class OBG-HflX-like GTPase superfamily. OBG GTPase family. In terms of assembly, interacts with RWDD1; this interaction confers protection to polyubiquitination and proteolytic degradation. Interacts with JMJD7; this interaction is direct. The cofactor is Mg(2+). Post-translationally, polyubiquitinated. Hydroxylated (with S stereochemistry) at C-3 of Lys-21 by JMJD7. As to expression, fairly high levels in liver, heart, kidney, and brain. Very low levels in lung, spleen, testis and skeletal muscle.

It is found in the nucleus. The protein resides in the cytoplasm. It catalyses the reaction GTP + H2O = GDP + phosphate + H(+). Catalyzes the conversion of GTP to GDP through hydrolysis of the gamma-phosphate bond in GTP. When hydroxylated at C-3 of 'Lys-21' by JMJD7, may bind to RNA and play a role in translation. This is Developmentally-regulated GTP-binding protein 2 (Drg2) from Mus musculus (Mouse).